We begin with the raw amino-acid sequence, 343 residues long: Cyclin-Y-like protein 1-B (343 aa).

The disordered stretch occupies residues 1-69 (MGNTVTCCVS…ECNPSDHPQA (69 aa)). Residues 17–28 (AGRDRRVAERGE) are compositionally biased toward basic and acidic residues. A Cyclin N-terminal domain is found at 145–267 (DIFDEKLHPL…FLELLQFNIN (123 aa)).

The protein belongs to the cyclin family. Cyclin Y subfamily.

The protein is Cyclin-Y-like protein 1-B (ccnyl1-b) of Xenopus laevis (African clawed frog).